A 276-amino-acid polypeptide reads, in one-letter code: CDP-diacylglycerol--serine O-phosphatidyltransferase (276 aa).

The disordered stretch occupies residues 1–21; sequence MVESDEDFAPQEFPHTDTDVI. Phosphoserine is present on residues serine 4, serine 34, serine 42, serine 46, serine 47, and serine 50. 4 helical membrane-spanning segments follow: residues 82-102, 163-183, 210-230, and 248-268; these read MADYITMLNGFSGFYSIVSCL, IAFAIGFQTTFDVMILSFFVL, YFEGLPMPTTLALVLGMAYCV, and QILEFHPIILVFFIHGCGMIS.

Belongs to the CDP-alcohol phosphatidyltransferase class-I family. It depends on Mn(2+) as a cofactor. Mg(2+) serves as cofactor.

The protein resides in the microsome membrane. Its subcellular location is the endoplasmic reticulum membrane. The protein localises to the mitochondrion outer membrane. It catalyses the reaction a CDP-1,2-diacyl-sn-glycerol + L-serine = a 1,2-diacyl-sn-glycero-3-phospho-L-serine + CMP + H(+). Its pathway is phospholipid metabolism; phosphatidylethanolamine biosynthesis; phosphatidylethanolamine from CDP-diacylglycerol: step 1/2. In terms of biological role, catalyzes the synthesis of phosphatidylserine (PtdSer). The protein is CDP-diacylglycerol--serine O-phosphatidyltransferase (CHO1) of Saccharomyces cerevisiae (strain ATCC 204508 / S288c) (Baker's yeast).